Here is a 462-residue protein sequence, read N- to C-terminus: Cytokine-like nuclear factor N-PAC (462 aa).

The PWWP domain maps to 8 to 66; sequence IGDLVWGKLGRYPPWPGKVVSPPKDLKKPRGKKCFFVKFFGTEDHAWIKVEQLKPYHPH. Residues 91–111 are compositionally biased toward basic and acidic residues; sequence KKAKGKDQSHSDDKSKSDKGR. The segment at 91–139 is disordered; that stretch reads KKAKGKDQSHSDDKSKSDKGRKAAKPMKIIEEDDEDAFKGGSSDKPASS. Residues 169–462 are dehydrogenase domain; that stretch reads GSITPTDKRI…MSAVYRAYIH (294 aa). Residues 179–193, Thr270, and Lys414 each bind NAD(+); that span reads GFLGLGLMGSGVVSN.

The protein belongs to the HIBADH-related family. NP60 subfamily. Homotetramere. Binds to mononucleosomes.

The protein resides in the nucleus. It is found in the chromosome. Its function is as follows. May have oxidoreductase activity. Regulates p38 MAP kinase activity by mediating stress activation of mapk14 and specifically regulating mapk14 signaling. Functionally, cytokine-like nuclear factor with chromatin gene reader activity involved in chromatin modification and regulation of gene expression. Acts as a nucleosome-destabilizing factor that is recruited to genes during transcriptional activation. Recognizes and binds histone H3 without a preference for specific epigenetic markers and also binds DNA. Interacts with KDM1B and promotes its histone demethylase activity by facilitating the capture of H3 tails, they form a multifunctional enzyme complex that modifies transcribed chromatin and facilitates Pol II transcription through nucleosomes. In Danio rerio (Zebrafish), this protein is Cytokine-like nuclear factor N-PAC (glyr1).